The primary structure comprises 95 residues: MIQAWHFPALQGAVNELQGSQSRIDALLEQCQESLTKLQSSWHGSGNESYSSVQRRFNQNTEGINHALGDLVQAINHSAETMQQTEAGVMSMFTG.

It belongs to the WXG100 family. ESAT-6 subfamily. In terms of assembly, forms a tight 1:1 complex with EsxB.

The protein resides in the secreted. Its function is as follows. A secreted protein that might play a role in virulence. The sequence is that of 6 kDa early secretory antigenic target homolog (esxA) from Mycobacterium leprae (strain TN).